Here is a 66-residue protein sequence, read N- to C-terminus: Large ribosomal subunit protein bL35 (66 aa).

The span at 1 to 44 (MPKLKSHRGAAKRFRKTASGAIKRRGAYRNHILTKKSTKQKRHL) shows a compositional bias: basic residues. The segment at 1–48 (MPKLKSHRGAAKRFRKTASGAIKRRGAYRNHILTKKSTKQKRHLRVEA) is disordered.

The protein belongs to the bacterial ribosomal protein bL35 family.

The chain is Large ribosomal subunit protein bL35 from Legionella pneumophila (strain Corby).